We begin with the raw amino-acid sequence, 318 residues long: NADH-ubiquinone oxidoreductase chain 1 (318 aa).

8 helical membrane passes run Phe-2–Leu-22, Leu-70–Pro-90, Phe-98–Trp-118, Ile-140–Phe-160, Trp-173–Thr-193, Ala-217–Leu-237, Glu-253–Ile-273, and Leu-294–Ile-314.

Belongs to the complex I subunit 1 family.

The protein resides in the mitochondrion inner membrane. The catalysed reaction is a ubiquinone + NADH + 5 H(+)(in) = a ubiquinol + NAD(+) + 4 H(+)(out). Core subunit of the mitochondrial membrane respiratory chain NADH dehydrogenase (Complex I) that is believed to belong to the minimal assembly required for catalysis. Complex I functions in the transfer of electrons from NADH to the respiratory chain. The immediate electron acceptor for the enzyme is believed to be ubiquinone. In Sapajus apella (Brown-capped capuchin), this protein is NADH-ubiquinone oxidoreductase chain 1 (MT-ND1).